A 602-amino-acid chain; its full sequence is Elongation factor 4 (602 aa).

The tr-type G domain maps to Ser7 to Lys189. Residues Asp19–Thr24 and Asn136–Asp139 each bind GTP.

Belongs to the TRAFAC class translation factor GTPase superfamily. Classic translation factor GTPase family. LepA subfamily.

It is found in the cell inner membrane. The enzyme catalyses GTP + H2O = GDP + phosphate + H(+). In terms of biological role, required for accurate and efficient protein synthesis under certain stress conditions. May act as a fidelity factor of the translation reaction, by catalyzing a one-codon backward translocation of tRNAs on improperly translocated ribosomes. Back-translocation proceeds from a post-translocation (POST) complex to a pre-translocation (PRE) complex, thus giving elongation factor G a second chance to translocate the tRNAs correctly. Binds to ribosomes in a GTP-dependent manner. The chain is Elongation factor 4 from Prochlorococcus marinus (strain MIT 9211).